We begin with the raw amino-acid sequence, 83 residues long: Mu-theraphotoxin-Hhn2b 1 (83 aa).

Positions methionine 1–alanine 21 are cleaved as a signal peptide. Positions serine 22–arginine 48 are excised as a propeptide. Disulfide bonds link cysteine 50-cysteine 65, cysteine 57-cysteine 70, and cysteine 64-cysteine 77. Position 81 is a leucine amide (leucine 81).

It belongs to the neurotoxin 10 (Hwtx-1) family. 14 (Hntx-1) subfamily. Monomer. In terms of tissue distribution, expressed by the venom gland.

It localises to the secreted. Functionally, weakly blocks the rat SCN2A/SCN1B (Nav1.2/beta-1) sodium channel (IC(50)=68 uM) and the insect sodium channel para/tipE (IC(50)=4.3 uM), without altering the activation or inactivation kinetics (depressant toxin). The protein is Mu-theraphotoxin-Hhn2b 1 of Cyriopagopus hainanus (Chinese bird spider).